Consider the following 469-residue polypeptide: UDP-N-acetylmuramate--L-alanine ligase (469 aa).

119-125 provides a ligand contact to ATP; sequence GTHGKTT.

This sequence belongs to the MurCDEF family.

It is found in the cytoplasm. The enzyme catalyses UDP-N-acetyl-alpha-D-muramate + L-alanine + ATP = UDP-N-acetyl-alpha-D-muramoyl-L-alanine + ADP + phosphate + H(+). It functions in the pathway cell wall biogenesis; peptidoglycan biosynthesis. In terms of biological role, cell wall formation. This chain is UDP-N-acetylmuramate--L-alanine ligase, found in Vesicomyosocius okutanii subsp. Calyptogena okutanii (strain HA).